The following is a 241-amino-acid chain: Small ribosomal subunit protein uS3 (241 aa).

Residues 39–108 (IREGVLKLLK…NLKVEVKVIE (70 aa)) enclose the KH type-2 domain. Residues 215–241 (SQRVSEKAPMNNDRRFNNKNNNRGGRK) form a disordered region. The span at 232–241 (NKNNNRGGRK) shows a compositional bias: low complexity.

It belongs to the universal ribosomal protein uS3 family. In terms of assembly, part of the 30S ribosomal subunit. Forms a tight complex with proteins S10 and S14.

In terms of biological role, binds the lower part of the 30S subunit head. Binds mRNA in the 70S ribosome, positioning it for translation. This is Small ribosomal subunit protein uS3 from Mesoplasma florum (strain ATCC 33453 / NBRC 100688 / NCTC 11704 / L1) (Acholeplasma florum).